A 581-amino-acid chain; its full sequence is A-type ATP synthase subunit A (581 aa).

Residue 232 to 239 coordinates ATP; that stretch reads GPFGSGKT.

Belongs to the ATPase alpha/beta chains family. In terms of assembly, has multiple subunits with at least A(3), B(3), C, D, E, F, H, I and proteolipid K(x).

The protein resides in the cell membrane. It catalyses the reaction ATP + H2O + 4 H(+)(in) = ADP + phosphate + 5 H(+)(out). In terms of biological role, component of the A-type ATP synthase that produces ATP from ADP in the presence of a proton gradient across the membrane. The A chain is the catalytic subunit. This is A-type ATP synthase subunit A from Methanocorpusculum labreanum (strain ATCC 43576 / DSM 4855 / Z).